A 133-amino-acid chain; its full sequence is MSTTGKGGKAKGKTASSKQVSRSARAGLQFPVGRISRFLKNGRYSERIGTGAPVYLAAVLEYLAAEVLELAGNAAKDNKKTRIVPRHILLAIRNDEELNKLMANTTIADGGVLPNINPMLLPSKTKKTSEAEH.

Residues 1–23 are disordered; sequence MSTTGKGGKAKGKTASSKQVSRS. S2 is subject to N-acetylserine. An N6-acetyllysine mark is found at K6, K9, K11, K13, and K18. Position 123 is a phosphoserine (S123). K124 participates in a covalent cross-link: Glycyl lysine isopeptide (Lys-Gly) (interchain with G-Cter in ubiquitin). S129 bears the Phosphoserine mark.

It belongs to the histone H2A family. As to quaternary structure, the nucleosome is a histone octamer containing two molecules each of H2A, H2B, H3 and H4 assembled in one H3-H4 heterotetramer and two H2A-H2B heterodimers. The octamer wraps approximately 147 bp of DNA. Monoubiquitination of Lys-124 gives a specific tag for epigenetic transcriptional repression. In terms of processing, acetylation occurs almost exclusively in the MAC.

Its subcellular location is the nucleus. The protein localises to the chromosome. Functionally, core component of nucleosome. Nucleosomes wrap and compact DNA into chromatin, limiting DNA accessibility to the cellular machineries which require DNA as a template. Histones thereby play a central role in transcription regulation, DNA repair, DNA replication and chromosomal stability. DNA accessibility is regulated via a complex set of post-translational modifications of histones, also called histone code, and nucleosome remodeling. The protein is Histone H2A.1 (HTA2) of Tetrahymena pyriformis.